The sequence spans 150 residues: Large ribosomal subunit protein bL9 (150 aa).

The protein belongs to the bacterial ribosomal protein bL9 family.

Its function is as follows. Binds to the 23S rRNA. The sequence is that of Large ribosomal subunit protein bL9 from Photobacterium profundum (strain SS9).